Consider the following 228-residue polypeptide: PKHD-type hydroxylase Reut_A2877 (228 aa).

In terms of domain architecture, Fe2OG dioxygenase spans 80-180; that stretch reads IVYPPMFNRY…RVASFFWIQS (101 aa). Residues histidine 98, aspartate 100, and histidine 161 each coordinate Fe cation. Position 171 (arginine 171) interacts with 2-oxoglutarate.

The cofactor is Fe(2+). Requires L-ascorbate as cofactor.

This is PKHD-type hydroxylase Reut_A2877 from Cupriavidus pinatubonensis (strain JMP 134 / LMG 1197) (Cupriavidus necator (strain JMP 134)).